A 1234-amino-acid chain; its full sequence is Formin-like protein 3 (1234 aa).

Residues 1 to 208 (MRLDSFPASI…QYVARRNISP (208 aa)) enclose the Phosphatase tensin-type domain. C141 (phosphocysteine intermediate) is an active-site residue. A C2 tensin-type domain is found at 214–352 (ERALSFDCLI…FRAEMLFCEL (139 aa)). Disordered stretches follow at residues 443-478 (DSDEEKYSVASDSVSSSEHEKVQPGGNSSDSENINH) and 492-840 (LVNT…LKPL). Over residues 498–507 (VLPPTTPPPC) the composition is skewed to pro residues. Residues 524-534 (VQHESPSDRKL) are compositionally biased toward basic and acidic residues. 7 stretches are compositionally biased toward pro residues: residues 536–576 (SPSP…PPLP), 584–656 (QPPP…PPAP), 663–673 (PAPPPPPPPPR), 688–699 (GPPPPPPPPLPP), 709–721 (PSAPPPPPPPPPA), 729–739 (APAPPLPPPLP), and 762–784 (PAPPPPPPQAPKPPGTVPPPPPL). The FH2 domain maps to 827-1226 (QQSNPPKKAS…KLEKDKEKAT (400 aa)).

Belongs to the formin-like family. Class-II subfamily.

The chain is Formin-like protein 3 (FH3) from Oryza sativa subsp. japonica (Rice).